A 249-amino-acid chain; its full sequence is Cobalt transport protein CbiM (249 aa).

Residues 1–27 (MKPLHRWLPVVIGAALLIIFESRAAYA) form the signal peptide. A run of 6 helical transmembrane segments spans residues 33–53 (GFLPPVWAGFWFIVVLPFWVL), 70–90 (LLLGFAAAFAFVLSALKIPSV), 102–122 (LGTILFGPLVMSVLGSIVLLF), 134–154 (TLGANAFSMAVVGPFVAWLIW), 161–181 (APIWLTVFLAAALADLFTYVV), and 207–227 (IFAVTQIPLAISEGILTVLIF).

Belongs to the CbiM family. In terms of assembly, forms an energy-coupling factor (ECF) transporter complex composed of an ATP-binding protein (A component, CbiO), a transmembrane protein (T component, CbiQ) and 2 possible substrate-capture proteins (S components, CbiM and CbiN) of unknown stoichimetry.

It localises to the cell membrane. It functions in the pathway cofactor biosynthesis; adenosylcobalamin biosynthesis. Part of the energy-coupling factor (ECF) transporter complex CbiMNOQ involved in cobalt import. This is Cobalt transport protein CbiM from Roseiflexus sp. (strain RS-1).